A 296-amino-acid polypeptide reads, in one-letter code: Cytochrome bc1 complex cytochrome c subunit (296 aa).

Residues 1 to 19 (MMETNPQTSEGAGKAQSSA) are compositionally biased toward polar residues. The interval 1–27 (MMETNPQTSEGAGKAQSSAKKVKNRRK) is disordered. The helical transmembrane segment at 32 to 52 (VAGAMALTIGLSGAGILATAI) threads the bilayer. 2 consecutive Cytochrome c domains span residues 67–147 (ALIA…AANG) and 177–255 (LDVS…KSTK). The heme c site is built by Cys-80, Cys-83, His-84, Cys-190, Cys-193, and His-194. The helical transmembrane segment at 274 to 294 (GLFMWGIGIMVLIAAAMWIGS) threads the bilayer.

The cytochrome bc1 complex is composed of a cytochrome b (QcrB), the Rieske iron-sulfur protein (QcrA) and a diheme cytochrome c (QcrC) subunit. The bc1 complex forms a supercomplex with cytochrome c oxidase (cytochrome aa3). Binds 2 heme c groups covalently per subunit.

The protein resides in the cell membrane. The enzyme catalyses a quinol + 2 Fe(III)-[cytochrome c](out) = a quinone + 2 Fe(II)-[cytochrome c](out) + 2 H(+)(out). In terms of biological role, cytochrome c1 subunit of the cytochrome bc1 complex, an essential component of the respiratory electron transport chain required for ATP synthesis. The bc1 complex catalyzes the oxidation of menaquinol and the reduction of cytochrome c in the respiratory chain. The bc1 complex operates through a Q-cycle mechanism that couples electron transfer to generation of the proton gradient that drives ATP synthesis. The chain is Cytochrome bc1 complex cytochrome c subunit (qcrC) from Corynebacterium efficiens (strain DSM 44549 / YS-314 / AJ 12310 / JCM 11189 / NBRC 100395).